Consider the following 234-residue polypeptide: BTB/POZ domain-containing protein KCTD5 (234 aa).

Ala-2 is subject to N-acetylalanine. Residues 44–146 (KWVRLNVGGT…LVKDKIRERD (103 aa)) enclose the BTB domain. The tract at residues 213–234 (PYGTTSEPSEKAKILQERGSRM) is disordered. A compositionally biased stretch (basic and acidic residues) spans 220–234 (PSEKAKILQERGSRM).

In terms of assembly, homopentamer. Interacts (via C-terminus) with GRASP55/GORASP2. Interacts with CUL3 and with ubiquitinated proteins. Interacts with CRY1.

The protein resides in the cytoplasm. Its subcellular location is the cytosol. It localises to the nucleus. Its function is as follows. Its interaction with CUL3 suggests that it may act as a substrate adapter in some E3 ligase complex. Does not affect the function of Kv channel Kv2.1/KCNB1, Kv1.2/KCNA2, Kv4.2/KCND2 and Kv3.4/KCNC4. This chain is BTB/POZ domain-containing protein KCTD5 (Kctd5), found in Mus musculus (Mouse).